A 149-amino-acid chain; its full sequence is D-aminoacyl-tRNA deacylase (149 aa).

The Gly-cisPro motif, important for rejection of L-amino acids motif lies at 137–138 (GP).

This sequence belongs to the DTD family. Homodimer.

It is found in the cytoplasm. It carries out the reaction glycyl-tRNA(Ala) + H2O = tRNA(Ala) + glycine + H(+). The catalysed reaction is a D-aminoacyl-tRNA + H2O = a tRNA + a D-alpha-amino acid + H(+). In terms of biological role, an aminoacyl-tRNA editing enzyme that deacylates mischarged D-aminoacyl-tRNAs. Also deacylates mischarged glycyl-tRNA(Ala), protecting cells against glycine mischarging by AlaRS. Acts via tRNA-based rather than protein-based catalysis; rejects L-amino acids rather than detecting D-amino acids in the active site. By recycling D-aminoacyl-tRNA to D-amino acids and free tRNA molecules, this enzyme counteracts the toxicity associated with the formation of D-aminoacyl-tRNA entities in vivo and helps enforce protein L-homochirality. The protein is D-aminoacyl-tRNA deacylase of Herminiimonas arsenicoxydans.